The chain runs to 605 residues: Probable Xaa-Pro aminopeptidase P (605 aa).

Mn(2+)-binding residues include aspartate 402, aspartate 413, glutamate 511, and glutamate 525.

This sequence belongs to the peptidase M24B family. Mn(2+) is required as a cofactor.

The catalysed reaction is Release of any N-terminal amino acid, including proline, that is linked to proline, even from a dipeptide or tripeptide.. Functionally, catalyzes the removal of a penultimate prolyl residue from the N-termini of peptides. This chain is Probable Xaa-Pro aminopeptidase P (AMPP), found in Leptosphaeria maculans (strain JN3 / isolate v23.1.3 / race Av1-4-5-6-7-8) (Blackleg fungus).